Reading from the N-terminus, the 421-residue chain is Gamma-glutamyl phosphate reductase (421 aa).

Belongs to the gamma-glutamyl phosphate reductase family.

It is found in the cytoplasm. The enzyme catalyses L-glutamate 5-semialdehyde + phosphate + NADP(+) = L-glutamyl 5-phosphate + NADPH + H(+). It functions in the pathway amino-acid biosynthesis; L-proline biosynthesis; L-glutamate 5-semialdehyde from L-glutamate: step 2/2. Functionally, catalyzes the NADPH-dependent reduction of L-glutamate 5-phosphate into L-glutamate 5-semialdehyde and phosphate. The product spontaneously undergoes cyclization to form 1-pyrroline-5-carboxylate. This Nocardia farcinica (strain IFM 10152) protein is Gamma-glutamyl phosphate reductase.